Here is a 924-residue protein sequence, read N- to C-terminus: DNA repair and recombination protein RDH54 (924 aa).

Over residues 1 to 10 (MQIPKYENKP) the composition is skewed to basic and acidic residues. Disordered regions lie at residues 1-21 (MQIPKYENKPFKPPRRVGSNK) and 155-182 (EALSQNMGNPNPPTTSTTETVPSTKNDG). Positions 168–178 (TTSTTETVPST) are enriched in low complexity. Residues 299-487 (LENDSDISGC…FTIIDFINPG (189 aa)) form the Helicase ATP-binding domain. Position 346–353 (346–353 (IPLTGLCK)) interacts with ATP. Positions 472–475 (NDLN) match the DEGH box motif. Lys615 participates in a covalent cross-link: Glycyl lysine isopeptide (Lys-Gly) (interchain with G-Cter in ubiquitin). Residues 631 to 790 (KLRVLMTLLE…DSEMRNKESS (160 aa)) enclose the Helicase C-terminal domain.

Belongs to the SNF2/RAD54 helicase family. In terms of assembly, interacts with RAD51 and DMC1.

The protein resides in the nucleus. It catalyses the reaction ATP + H2O = ADP + phosphate + H(+). Involved in the recombinational repair of double-strand breaks (DSB) in DNA during mitosis and meiosis. Has DNA dependent ATPase activity. Promotes D-loop (displacement loop) formation with RAD51 recombinase. Modifies the topology of double-stranded DNA during the D-loop reaction to facilitate the invasion of the homologous duplex molecule by the initiating single-stranded DNA substrate. Required for adaptation from G2/M checkpoint arrest induced by a double strand break, by participating in monitoring the extent of single-stranded DNA produced by resection of DNA ends. This role is distinct from its roles in recombination. Promotes colocalization of RAD51 and DMC1 during meiotic recombination. Involved in crossover interference. The sequence is that of DNA repair and recombination protein RDH54 (RDH54) from Saccharomyces cerevisiae (strain AWRI1631) (Baker's yeast).